We begin with the raw amino-acid sequence, 472 residues long: 3-isopropylmalate dehydratase large subunit (472 aa).

Positions 347, 407, and 410 each coordinate [4Fe-4S] cluster.

Belongs to the aconitase/IPM isomerase family. LeuC type 1 subfamily. As to quaternary structure, heterodimer of LeuC and LeuD. [4Fe-4S] cluster serves as cofactor.

It carries out the reaction (2R,3S)-3-isopropylmalate = (2S)-2-isopropylmalate. It participates in amino-acid biosynthesis; L-leucine biosynthesis; L-leucine from 3-methyl-2-oxobutanoate: step 2/4. Catalyzes the isomerization between 2-isopropylmalate and 3-isopropylmalate, via the formation of 2-isopropylmaleate. The polypeptide is 3-isopropylmalate dehydratase large subunit (Synechococcus sp. (strain WH7803)).